The primary structure comprises 394 residues: 1-deoxy-D-xylulose 5-phosphate reductoisomerase (394 aa).

NADPH is bound by residues Thr13, Gly14, Ser15, Ile16, and Asn127. Residue Lys128 coordinates 1-deoxy-D-xylulose 5-phosphate. An NADPH-binding site is contributed by Glu129. Position 153 (Asp153) interacts with Mn(2+). Ser154, Glu155, Ser184, and His207 together coordinate 1-deoxy-D-xylulose 5-phosphate. Mn(2+) is bound at residue Glu155. NADPH is bound at residue Gly213. Ser220, Asn225, Lys226, and Glu229 together coordinate 1-deoxy-D-xylulose 5-phosphate. Glu229 is a binding site for Mn(2+).

Belongs to the DXR family. It depends on Mg(2+) as a cofactor. Mn(2+) serves as cofactor.

It catalyses the reaction 2-C-methyl-D-erythritol 4-phosphate + NADP(+) = 1-deoxy-D-xylulose 5-phosphate + NADPH + H(+). It functions in the pathway isoprenoid biosynthesis; isopentenyl diphosphate biosynthesis via DXP pathway; isopentenyl diphosphate from 1-deoxy-D-xylulose 5-phosphate: step 1/6. Functionally, catalyzes the NADPH-dependent rearrangement and reduction of 1-deoxy-D-xylulose-5-phosphate (DXP) to 2-C-methyl-D-erythritol 4-phosphate (MEP). The chain is 1-deoxy-D-xylulose 5-phosphate reductoisomerase from Ectopseudomonas mendocina (strain ymp) (Pseudomonas mendocina).